The sequence spans 345 residues: Meiotically up-regulated gene 97 protein (345 aa).

The next 2 membrane-spanning stretches (helical) occupy residues 292–312 (MWVL…GLWM) and 319–329 (FAHGMLLNLGI).

The protein localises to the membrane. Its function is as follows. Required for correct meiotic chromosome segregation. Appears to also have role in sporulation. In Schizosaccharomyces pombe (strain 972 / ATCC 24843) (Fission yeast), this protein is Meiotically up-regulated gene 97 protein (mug97).